Here is a 106-residue protein sequence, read N- to C-terminus: uncharacterized protein (106 aa).

The next 2 membrane-spanning stretches (helical) occupy residues 25-45 (VMNV…IHYI) and 62-82 (ICFL…NFQG).

Its subcellular location is the membrane. This is an uncharacterized protein from Saccharomyces cerevisiae (strain ATCC 204508 / S288c) (Baker's yeast).